Consider the following 107-residue polypeptide: Proteinase inhibitor I-B (107 aa).

An N-terminal signal peptide occupies residues 1 to 22; that stretch reads MVKFAHVVAFLLLASLFQPLTA. The propeptide occupies 23–39; it reads RDLEINVLQLDVSQSGC.

This sequence belongs to the protease inhibitor I13 (potato type I serine protease inhibitor) family.

The protein localises to the secreted. The protein is Proteinase inhibitor I-B (TIMPA) of Nicotiana tabacum (Common tobacco).